The following is a 688-amino-acid chain: Methionine--tRNA ligase (688 aa).

The 'HIGH' region motif lies at 15 to 25; that stretch reads PYANGPIHLGH. Positions 146, 149, 159, and 162 each coordinate Zn(2+). A 'KMSKS' region motif is present at residues 332–336; the sequence is KMSKS. Lys-335 contributes to the ATP binding site. The tract at residues 552-576 is disordered; sequence AEAPKKADSKKATDTPVDTRPPLES. The span at 554-564 shows a compositional bias: basic and acidic residues; it reads APKKADSKKAT. In terms of domain architecture, tRNA-binding spans 587–688; sequence DFAKIDLRIA…EGAQPGMRVK (102 aa).

Belongs to the class-I aminoacyl-tRNA synthetase family. MetG type 1 subfamily. Homodimer. Zn(2+) serves as cofactor.

Its subcellular location is the cytoplasm. The enzyme catalyses tRNA(Met) + L-methionine + ATP = L-methionyl-tRNA(Met) + AMP + diphosphate. Its function is as follows. Is required not only for elongation of protein synthesis but also for the initiation of all mRNA translation through initiator tRNA(fMet) aminoacylation. The chain is Methionine--tRNA ligase from Shewanella woodyi (strain ATCC 51908 / MS32).